A 750-amino-acid polypeptide reads, in one-letter code: Photosystem I P700 chlorophyll a apoprotein A1 (750 aa).

8 consecutive transmembrane segments (helical) span residues 70–93 (VFSA…FHGA), 156–179 (LYCT…FHYH), 195–219 (LNHH…HVSL), 291–309 (IAHH…GHMY), 346–369 (WHAQ…HHMY), 385–411 (LSLF…IFMV), 433–455 (AIIS…LYIH), and 531–549 (FLVH…LILL). 2 residues coordinate [4Fe-4S] cluster: C573 and C582. The next 2 helical transmembrane spans lie at 589–610 (HVFL…HFSW) and 664–686 (LSAY…MFLF). H675 provides a ligand contact to chlorophyll a'. The chlorophyll a site is built by M683 and Y691. A phylloquinone-binding site is contributed by W692. A helical membrane pass occupies residues 724 to 744 (AVGVTHYLLGGIATTWAFFLA).

This sequence belongs to the PsaA/PsaB family. The PsaA/B heterodimer binds the P700 chlorophyll special pair and subsequent electron acceptors. PSI consists of a core antenna complex that captures photons, and an electron transfer chain that converts photonic excitation into a charge separation. The eukaryotic PSI reaction center is composed of at least 11 subunits. The cofactor is P700 is a chlorophyll a/chlorophyll a' dimer, A0 is one or more chlorophyll a, A1 is one or both phylloquinones and FX is a shared 4Fe-4S iron-sulfur center..

Its subcellular location is the plastid. It is found in the chloroplast thylakoid membrane. The catalysed reaction is reduced [plastocyanin] + hnu + oxidized [2Fe-2S]-[ferredoxin] = oxidized [plastocyanin] + reduced [2Fe-2S]-[ferredoxin]. Functionally, psaA and PsaB bind P700, the primary electron donor of photosystem I (PSI), as well as the electron acceptors A0, A1 and FX. PSI is a plastocyanin-ferredoxin oxidoreductase, converting photonic excitation into a charge separation, which transfers an electron from the donor P700 chlorophyll pair to the spectroscopically characterized acceptors A0, A1, FX, FA and FB in turn. Oxidized P700 is reduced on the lumenal side of the thylakoid membrane by plastocyanin. The protein is Photosystem I P700 chlorophyll a apoprotein A1 of Jasminum nudiflorum (Winter jasmine).